A 178-amino-acid polypeptide reads, in one-letter code: Large ribosomal subunit protein uL13m (178 aa).

This sequence belongs to the universal ribosomal protein uL13 family. Component of the mitochondrial ribosome large subunit (39S) which comprises a 16S rRNA and about 50 distinct proteins. Interacts with OXA1L.

It localises to the mitochondrion. The chain is Large ribosomal subunit protein uL13m (MRPL13) from Bos taurus (Bovine).